The following is a 520-amino-acid chain: MMLRGNLKQVRIEKNPARLRALESAAGEGDPAALALALPGEPPVPAAPAGEDRPADEGGFTIDIKSFLKPGEKTYTQRCRLFVGNLPTDITEDDFKRLFERYGEPSEVFINRDRGFGFIRLESRTLAEIAKAELDGTILKSRPLRIRFATHGAALTVKNLSPVVSNELLEQAFSQFGPVEKAVVVVDDRGRATGKGFVEFAAKPPARKALERCGDGAFLLTTTPRPVIVEPMEQFDDEDGLPEKLMQKTQQYHKEREQPPRFAQPGTFEFEYASRWKALDEMEKQQREQVDRNIREAKEKLEAEMEAARHEHQLMLMRQDLMRRQEELRRLEELRNQELQKRKQIQLRHEEEHRRREEEMIRHREQEELRRQQEGFKPNYMENREQEMRMGDMGPRGAINMGDAFSPAPAGNQGPPAMMGMNMNNRGTIPGPPMGPGPAMGPEGAANMGTPMMPDNGAVHNDRFPQGPPSQMGSPMGSRTGSETPQAPMSGVGPVSGGPGGFGRGSQGANFEGPNKRRRY.

Methionine 1 bears the N-acetylmethionine mark. RRM domains follow at residues 79-151 (CRLF…FATH) and 153-234 (AALT…PMEQ). Residues 122–355 (ESRTLAEIAK…QLRHEEEHRR (234 aa)) are sufficient for paraspeckles localization. Positions 228–355 (IVEPMEQFDD…QLRHEEEHRR (128 aa)) are sufficient for perinucleolar caps localization and interaction with NONO. A coiled-coil region spans residues 280 to 374 (DEMEKQQREQ…EQEELRRQQE (95 aa)). Phosphoserine is present on residues serine 406, serine 470, and serine 474. The segment at 457–520 (GAVHNDRFPQ…FEGPNKRRRY (64 aa)) is disordered. Polar residues predominate over residues 469 to 487 (PSQMGSPMGSRTGSETPQA). Residues 494-506 (PVSGGPGGFGRGS) show a composition bias toward gly residues. The residue at position 504 (arginine 504) is an Omega-N-methylarginine. At serine 506 the chain carries Phosphoserine.

This sequence belongs to the PSPC family. As to quaternary structure, forms heterodimers with NONO; this involves formation of a coiled coil domain by helices from both proteins. Found in a RNP complex with CAT2 transcribed nuclear RNA (CTN-RNA). Interaction with NONO is required for its targeting to paraspeckles and perinucleolar caps. Interacts with SFPQ. Part of the HDP-RNP complex composed of at least HEXIM1, PRKDC, XRCC5, XRCC6, paraspeckle proteins (SFPQ, NONO, PSPC1, RBM14, and MATR3) and NEAT1 RNA. Interacts with ALKBH5 (when acetylated); interaction with acetylated ALKBH5 facilitates recognition of N(6)-methyladenosine (m6A) RNAs.

The protein resides in the nucleus speckle. It is found in the nucleus. It localises to the nucleolus. Its subcellular location is the nucleus matrix. The protein localises to the cytoplasm. Its function is as follows. RNA-binding protein required for the formation of nuclear paraspeckles. Binds to poly(A), poly(G) and poly(U) RNA homopolymers. Regulates, cooperatively with NONO and SFPQ, androgen receptor-mediated gene transcription activity in Sertoli cell line. Regulates the circadian clock by repressing the transcriptional activator activity of the CLOCK-BMAL1 heterodimer. Plays a role in the regulation of DNA virus-mediated innate immune response by assembling into the HDP-RNP complex, a complex that serves as a platform for IRF3 phosphorylation and subsequent innate immune response activation through the cGAS-STING pathway. The protein is Paraspeckle component 1 (PSPC1) of Bos taurus (Bovine).